The sequence spans 550 residues: Probable acyl-activating enzyme 6 (550 aa).

It belongs to the ATP-dependent AMP-binding enzyme family. In terms of tissue distribution, expressed at low levels in roots, leaves, stems and developing seeds.

In terms of biological role, may act as an acid--thiol ligase that activates carboxylic acids by forming acyl-CoAs. The protein is Probable acyl-activating enzyme 6 (AAE6) of Arabidopsis thaliana (Mouse-ear cress).